The chain runs to 669 residues: DNA ligase (669 aa).

Residues 34 to 38, 83 to 84, and Glu114 each bind NAD(+); these read DAEYD and SL. Residue Lys116 is the N6-AMP-lysine intermediate of the active site. Residues Arg137, Glu171, Lys287, and Lys311 each contribute to the NAD(+) site. 4 residues coordinate Zn(2+): Cys405, Cys408, Cys423, and Cys428. The region spanning 591–669 is the BRCT domain; sequence NVESYFAGKT…EERFLQELNK (79 aa).

The protein belongs to the NAD-dependent DNA ligase family. LigA subfamily. The cofactor is Mg(2+). Requires Mn(2+) as cofactor.

The catalysed reaction is NAD(+) + (deoxyribonucleotide)n-3'-hydroxyl + 5'-phospho-(deoxyribonucleotide)m = (deoxyribonucleotide)n+m + AMP + beta-nicotinamide D-nucleotide.. Functionally, DNA ligase that catalyzes the formation of phosphodiester linkages between 5'-phosphoryl and 3'-hydroxyl groups in double-stranded DNA using NAD as a coenzyme and as the energy source for the reaction. It is essential for DNA replication and repair of damaged DNA. The polypeptide is DNA ligase (Bacillus cereus (strain ZK / E33L)).